A 205-amino-acid polypeptide reads, in one-letter code: Large ribosomal subunit protein uL3c (205 aa).

The segment at S129 to R154 is disordered.

Belongs to the universal ribosomal protein uL3 family. As to quaternary structure, part of the 50S ribosomal subunit.

The protein localises to the plastid. It localises to the chloroplast. In terms of biological role, one of the primary rRNA binding proteins, it binds directly near the 3'-end of the 23S rRNA, where it nucleates assembly of the 50S subunit. The polypeptide is Large ribosomal subunit protein uL3c (rpl3) (Pyropia yezoensis (Susabi-nori)).